The chain runs to 318 residues: Aspartate carbamoyltransferase catalytic subunit (318 aa).

Residues Arg-57 and Thr-58 each contribute to the carbamoyl phosphate site. Lys-85 is a binding site for L-aspartate. Carbamoyl phosphate is bound by residues Arg-107, His-141, and Gln-144. The L-aspartate site is built by Arg-174 and Arg-228. Residues Gly-269 and Pro-270 each coordinate carbamoyl phosphate.

Belongs to the aspartate/ornithine carbamoyltransferase superfamily. ATCase family. In terms of assembly, heterododecamer (2C3:3R2) of six catalytic PyrB chains organized as two trimers (C3), and six regulatory PyrI chains organized as three dimers (R2).

It catalyses the reaction carbamoyl phosphate + L-aspartate = N-carbamoyl-L-aspartate + phosphate + H(+). Its pathway is pyrimidine metabolism; UMP biosynthesis via de novo pathway; (S)-dihydroorotate from bicarbonate: step 2/3. Functionally, catalyzes the condensation of carbamoyl phosphate and aspartate to form carbamoyl aspartate and inorganic phosphate, the committed step in the de novo pyrimidine nucleotide biosynthesis pathway. In Mycolicibacterium smegmatis (strain ATCC 700084 / mc(2)155) (Mycobacterium smegmatis), this protein is Aspartate carbamoyltransferase catalytic subunit.